We begin with the raw amino-acid sequence, 230 residues long: Vacuole-localized protein 4 (230 aa).

Residues 1–19 (MRVSSAIFTIASGIAAVSA) form the signal peptide.

The protein resides in the vacuole. Functionally, vacuolar protein required for aerial conidiation and conidial maturation. Also involved in blastospore production and cell cycle. Plays a vital role in the secretion of Pr1 proteases for cuticular penetration and hence contributes significantly to host infection and virulence. The chain is Vacuole-localized protein 4 from Beauveria bassiana (strain ARSEF 2860) (White muscardine disease fungus).